The sequence spans 253 residues: Phosphonates import ATP-binding protein PhnC (253 aa).

The ABC transporter domain maps to V4 to G247. Position 36-43 (G36–S43) interacts with ATP.

It belongs to the ABC transporter superfamily. Phosphonates importer (TC 3.A.1.9.1) family. The complex is composed of two ATP-binding proteins (PhnC), two transmembrane proteins (PhnE) and a solute-binding protein (PhnD).

It localises to the cell membrane. It carries out the reaction phosphonate(out) + ATP + H2O = phosphonate(in) + ADP + phosphate + H(+). Functionally, part of the ABC transporter complex PhnCDE involved in phosphonates import. Responsible for energy coupling to the transport system. The sequence is that of Phosphonates import ATP-binding protein PhnC from Frankia casuarinae (strain DSM 45818 / CECT 9043 / HFP020203 / CcI3).